Reading from the N-terminus, the 142-residue chain is Large ribosomal subunit protein uL11 (142 aa).

This sequence belongs to the universal ribosomal protein uL11 family. Part of the ribosomal stalk of the 50S ribosomal subunit. Interacts with L10 and the large rRNA to form the base of the stalk. L10 forms an elongated spine to which L12 dimers bind in a sequential fashion forming a multimeric L10(L12)X complex. Post-translationally, one or more lysine residues are methylated.

Forms part of the ribosomal stalk which helps the ribosome interact with GTP-bound translation factors. The polypeptide is Large ribosomal subunit protein uL11 (Shewanella piezotolerans (strain WP3 / JCM 13877)).